Here is a 168-residue protein sequence, read N- to C-terminus: Profilin-3 (168 aa).

Residues 14–36 (LSLEHSDKPQRRSRAKVKKKKKT) are disordered. A compositionally biased stretch (basic residues) spans 24-36 (RRSRAKVKKKKKT).

Belongs to the profilin family. Occurs in many kinds of cells as a complex with monomeric actin in a 1:1 ratio. Binding to the poly-proline motif of formins induces formation of oligomers through the N-terminal hydrophobic residues of PRF3. As to expression, expressed in roots, rosette leaves, cauline leaves, stems and flowers.

Its subcellular location is the cytoplasm. The protein localises to the cytoskeleton. In terms of biological role, binds to actin monomers and regulates the organization of the actin cytoskeleton. Can increase the critical concentration (Cc) of actin assembly in vitro. Acts as a downstream effector of the hydrogen sulfide signaling to regulate the assembly and depolymerization of F-actin. At high concentrations, profilin prevents the polymerization of actin, whereas it enhances it at low concentrations. Binding to the poly-proline motif of formin induces oligomerization of PRF3. PRF3 oligomers inhibit formin-mediated actin assembly to modulate plant immunity triggered by pathogen-associated molecular patterns (PAMPs). The protein is Profilin-3 of Arabidopsis thaliana (Mouse-ear cress).